A 486-amino-acid chain; its full sequence is Glutamyl-tRNA(Gln) amidotransferase subunit A (486 aa).

Residues Lys-75 and Ser-150 each act as charge relay system in the active site. Ser-174 serves as the catalytic Acyl-ester intermediate.

It belongs to the amidase family. GatA subfamily. In terms of assembly, heterotrimer of A, B and C subunits.

The catalysed reaction is L-glutamyl-tRNA(Gln) + L-glutamine + ATP + H2O = L-glutaminyl-tRNA(Gln) + L-glutamate + ADP + phosphate + H(+). Its function is as follows. Allows the formation of correctly charged Gln-tRNA(Gln) through the transamidation of misacylated Glu-tRNA(Gln) in organisms which lack glutaminyl-tRNA synthetase. The reaction takes place in the presence of glutamine and ATP through an activated gamma-phospho-Glu-tRNA(Gln). This Trichormus variabilis (strain ATCC 29413 / PCC 7937) (Anabaena variabilis) protein is Glutamyl-tRNA(Gln) amidotransferase subunit A.